Here is a 274-residue protein sequence, read N- to C-terminus: Large ribosomal subunit protein uL2 (274 aa).

The segment at 224-274 (AMNPVDHPHGGGEGRTGEGQVPVSPWNTMTKGYRTRSNKRTQTFIVSRRKK) is disordered. The span at 229-239 (DHPHGGGEGRT) shows a compositional bias: basic and acidic residues.

It belongs to the universal ribosomal protein uL2 family. Part of the 50S ribosomal subunit. Forms a bridge to the 30S subunit in the 70S ribosome.

Its function is as follows. One of the primary rRNA binding proteins. Required for association of the 30S and 50S subunits to form the 70S ribosome, for tRNA binding and peptide bond formation. It has been suggested to have peptidyltransferase activity; this is somewhat controversial. Makes several contacts with the 16S rRNA in the 70S ribosome. This chain is Large ribosomal subunit protein uL2, found in Methylibium petroleiphilum (strain ATCC BAA-1232 / LMG 22953 / PM1).